A 377-amino-acid polypeptide reads, in one-letter code: RNA polymerase sigma factor SigA (377 aa).

The tract at residues Glu72 to Phe92 is disordered. The tract at residues Leu144–Thr214 is sigma-70 factor domain-2. The short motif at Asp168–Gln171 is the Interaction with polymerase core subunit RpoC element. Positions Glu223–Ala299 are sigma-70 factor domain-3. Positions Val312–His365 are sigma-70 factor domain-4. Positions Leu338–Ala357 form a DNA-binding region, H-T-H motif.

The protein belongs to the sigma-70 factor family. RpoD/SigA subfamily. In terms of assembly, interacts transiently with the RNA polymerase catalytic core.

The protein localises to the cytoplasm. Its function is as follows. Sigma factors are initiation factors that promote the attachment of RNA polymerase to specific initiation sites and are then released. This sigma factor is the primary sigma factor during exponential growth. This is RNA polymerase sigma factor SigA from Bacillus sp.